A 476-amino-acid chain; its full sequence is Aspartyl/glutamyl-tRNA(Asn/Gln) amidotransferase subunit B (476 aa).

Belongs to the GatB/GatE family. GatB subfamily. As to quaternary structure, heterotrimer of A, B and C subunits.

It carries out the reaction L-glutamyl-tRNA(Gln) + L-glutamine + ATP + H2O = L-glutaminyl-tRNA(Gln) + L-glutamate + ADP + phosphate + H(+). It catalyses the reaction L-aspartyl-tRNA(Asn) + L-glutamine + ATP + H2O = L-asparaginyl-tRNA(Asn) + L-glutamate + ADP + phosphate + 2 H(+). In terms of biological role, allows the formation of correctly charged Asn-tRNA(Asn) or Gln-tRNA(Gln) through the transamidation of misacylated Asp-tRNA(Asn) or Glu-tRNA(Gln) in organisms which lack either or both of asparaginyl-tRNA or glutaminyl-tRNA synthetases. The reaction takes place in the presence of glutamine and ATP through an activated phospho-Asp-tRNA(Asn) or phospho-Glu-tRNA(Gln). This chain is Aspartyl/glutamyl-tRNA(Asn/Gln) amidotransferase subunit B, found in Clostridium botulinum (strain Eklund 17B / Type B).